The chain runs to 1940 residues: Myosin-2 (1940 aa).

A Myosin N-terminal SH3-like domain is found at 33 to 82; the sequence is DAKTSVFVAEPKESFVKGTIQSREGGKVTVKTEGGATLTVKEDQVFPMNP. 2 positions are modified to phosphothreonine: T64 and T69. A Myosin motor domain is found at 86 to 783; that stretch reads DKIEDMAMMT…LLGLLEEMRD (698 aa). An N6,N6,N6-trimethyllysine modification is found at K130. 179–186 is an ATP binding site; sequence GESGAGKT. Phosphotyrosine is present on Y389. S392 bears the Phosphoserine mark. T419 bears the Phosphothreonine mark. A Phosphoserine modification is found at S625. The segment at 660-682 is actin-binding; sequence LNKLMTNLRSTHPHFVRCIIPNE. Residue H758 is modified to Pros-methylhistidine. The segment at 762 to 776 is actin-binding; sequence KFGHTKVFFKAGLLG. Positions 786–815 constitute an IQ domain; sequence LAQLMTRTQARCRGFLARVEYQKMVERRES. The stretch at 844–1940 forms a coiled coil; the sequence is LLKSAETEKE…EVHTKIISEE (1097 aa). S1093, S1097, S1163, and S1238 each carry phosphoserine. Residue T1242 is modified to Phosphothreonine. Residue S1244 is modified to Phosphoserine. Phosphothreonine occurs at positions 1256 and 1287. S1289, S1293, S1304, and S1307 each carry phosphoserine. Y1465 is subject to Phosphotyrosine. The residue at position 1468 (T1468) is a Phosphothreonine. Y1493 is modified (phosphotyrosine). At S1496 the chain carries Phosphoserine. T1502 bears the Phosphothreonine mark. S1515 is modified (phosphoserine). At T1518 the chain carries Phosphothreonine. Residues S1543, S1555, S1575, S1601, S1715, and S1727 each carry the phosphoserine modification. T1731 and T1737 each carry phosphothreonine. Positions 1886–1905 are disordered; sequence QAEEAEEQSNTNLSKFRKLQ.

Belongs to the TRAFAC class myosin-kinesin ATPase superfamily. Myosin family. In terms of assembly, muscle myosin is a hexameric protein that consists of 2 heavy chain subunits (MHC), 2 alkali light chain subunits (MLC) and 2 regulatory light chain subunits (MLC-2). Interacts with GCSAM.

Its subcellular location is the cytoplasm. It localises to the myofibril. Its function is as follows. Myosins are actin-based motor molecules with ATPase activity essential for muscle contraction. This is Myosin-2 (MYH2) from Bos taurus (Bovine).